Here is a 61-residue protein sequence, read N- to C-terminus: Beta-insect depressant toxin BaIT2 (61 aa).

The 61-residue stretch at 1–61 (DGYIRRRDGC…TWKSETNTCG (61 aa)) folds into the LCN-type CS-alpha/beta domain. 4 disulfides stabilise this stretch: Cys10–Cys60, Cys14–Cys35, Cys21–Cys42, and Cys25–Cys44.

It belongs to the long (4 C-C) scorpion toxin superfamily. Sodium channel inhibitor family. Beta subfamily. As to expression, expressed by the venom gland.

It is found in the secreted. Depressant insect beta-toxins cause a transient contraction paralysis followed by a slow flaccid paralysis. They bind voltage-independently at site-4 of sodium channels (Nav) and shift the voltage of activation toward more negative potentials thereby affecting sodium channel activation and promoting spontaneous and repetitive firing. This toxin is active only on insects. The sequence is that of Beta-insect depressant toxin BaIT2 from Buthacus arenicola (North African scorpion).